A 205-amino-acid chain; its full sequence is dTTP/UTP pyrophosphatase (205 aa).

Residue Asp-81 is the Proton acceptor of the active site.

The protein belongs to the Maf family. YhdE subfamily. A divalent metal cation serves as cofactor.

Its subcellular location is the cytoplasm. It carries out the reaction dTTP + H2O = dTMP + diphosphate + H(+). The enzyme catalyses UTP + H2O = UMP + diphosphate + H(+). Nucleoside triphosphate pyrophosphatase that hydrolyzes dTTP and UTP. May have a dual role in cell division arrest and in preventing the incorporation of modified nucleotides into cellular nucleic acids. The chain is dTTP/UTP pyrophosphatase from Agathobacter rectalis (strain ATCC 33656 / DSM 3377 / JCM 17463 / KCTC 5835 / VPI 0990) (Eubacterium rectale).